The following is a 135-amino-acid chain: ATP synthase epsilon chain, chloroplastic (135 aa).

Belongs to the ATPase epsilon chain family. F-type ATPases have 2 components, CF(1) - the catalytic core - and CF(0) - the membrane proton channel. CF(1) has five subunits: alpha(3), beta(3), gamma(1), delta(1), epsilon(1). CF(0) has three main subunits: a, b and c.

It is found in the plastid. The protein resides in the chloroplast thylakoid membrane. Its function is as follows. Produces ATP from ADP in the presence of a proton gradient across the membrane. The polypeptide is ATP synthase epsilon chain, chloroplastic (Euglena gracilis).